Consider the following 140-residue polypeptide: LGEKPFTCMECSKSFSQKSNLQTHYKIHTGEKPFTCMECGRTFSQKSTLLSHYKMHTGERPFSCSECGKSFSHKNKLTLHQKIHTGEKPYACTECGKRFPEKSKLKIHWKIHTREKPFSCTECGKKFSRESNLYFHQKMH.

5 C2H2-type zinc fingers span residues 6-28, 34-56, 62-84, 90-112, and 118-140; these read FTCM…YKIH, FTCM…YKMH, FSCS…QKIH, YACT…WKIH, and FSCT…QKMH.

This sequence belongs to the krueppel C2H2-type zinc-finger protein family.

It localises to the nucleus. In terms of biological role, may be involved in transcriptional regulation. This chain is Gastrula zinc finger protein XlCGF49.1, found in Xenopus laevis (African clawed frog).